Here is a 565-residue protein sequence, read N- to C-terminus: Urocanate hydratase (565 aa).

Residues 61-62 (GG), Gln-139, 185-187 (GMG), Glu-205, Arg-210, 251-252 (NA), 272-276 (QTSAH), 282-283 (YL), and Tyr-331 contribute to the NAD(+) site. Cys-419 is a catalytic residue. The interval 453-472 (LDSGSVSSPNRETESMKDGS) is disordered. The segment covering 463-472 (RETESMKDGS) has biased composition (basic and acidic residues). Residue Gly-501 participates in NAD(+) binding.

This sequence belongs to the urocanase family. The cofactor is NAD(+).

The protein resides in the cytoplasm. It catalyses the reaction 4-imidazolone-5-propanoate = trans-urocanate + H2O. It participates in amino-acid degradation; L-histidine degradation into L-glutamate; N-formimidoyl-L-glutamate from L-histidine: step 2/3. In terms of biological role, catalyzes the conversion of urocanate to 4-imidazolone-5-propionate. This is Urocanate hydratase from Pseudomonas syringae.